The chain runs to 224 residues: C-&gt;U-editing enzyme APOBEC-2 (224 aa).

The interval M1 to L24 is disordered. Residues E60 and H98 each contribute to the Zn(2+) site. The CMP/dCMP-type deaminase domain maps to G64–L169. The active-site Proton donor is the E100. Zn(2+)-binding residues include C128 and C131.

This sequence belongs to the cytidine and deoxycytidylate deaminase family. As to quaternary structure, homotetramer. The cofactor is Zn(2+). As to expression, expressed exclusively in heart and skeletal muscle.

The enzyme catalyses cytidine(6666) in apoB mRNA + H2O + H(+) = uridine(6666) in apoB mRNA + NH4(+). Functionally, probable C to U editing enzyme whose physiological substrate is not yet known. Does not display detectable apoB mRNA editing. Has a low intrinsic cytidine deaminase activity. May play a role in the epigenetic regulation of gene expression through the process of active DNA demethylation. The polypeptide is C-&gt;U-editing enzyme APOBEC-2 (APOBEC2) (Homo sapiens (Human)).